A 442-amino-acid chain; its full sequence is tRNA modification GTPase MnmE (442 aa).

3 residues coordinate (6S)-5-formyl-5,6,7,8-tetrahydrofolate: arginine 27, glutamate 84, and lysine 124. In terms of domain architecture, TrmE-type G spans glycine 221–glutamate 366. Residues asparagine 231–serine 236, serine 250–threonine 256, and aspartate 275–glycine 278 each bind GTP. Mg(2+)-binding residues include serine 235 and threonine 256. Residue lysine 442 participates in (6S)-5-formyl-5,6,7,8-tetrahydrofolate binding.

It belongs to the TRAFAC class TrmE-Era-EngA-EngB-Septin-like GTPase superfamily. TrmE GTPase family. As to quaternary structure, homodimer. Heterotetramer of two MnmE and two MnmG subunits. The cofactor is K(+).

It localises to the cytoplasm. Its function is as follows. Exhibits a very high intrinsic GTPase hydrolysis rate. Involved in the addition of a carboxymethylaminomethyl (cmnm) group at the wobble position (U34) of certain tRNAs, forming tRNA-cmnm(5)s(2)U34. This Brucella ovis (strain ATCC 25840 / 63/290 / NCTC 10512) protein is tRNA modification GTPase MnmE.